The primary structure comprises 153 residues: Peptide methionine sulfoxide reductase B6 (153 aa).

Residues 28-149 enclose the MsrB domain; that stretch reads NEEWRTVLSP…NSVALKFSSA (122 aa). The Zn(2+) site is built by C67, C70, C113, and C116. Residues C85 and C138 are joined by a disulfide bond. C138 serves as the catalytic Nucleophile.

It belongs to the MsrB Met sulfoxide reductase family. Requires Zn(2+) as cofactor.

Its subcellular location is the cytoplasm. It is found in the cytosol. The catalysed reaction is L-methionyl-[protein] + [thioredoxin]-disulfide + H2O = L-methionyl-(R)-S-oxide-[protein] + [thioredoxin]-dithiol. Functionally, catalyzes the reduction of methionine sulfoxide (MetSO) to methionine in proteins. Plays a protective role against oxidative stress by restoring activity to proteins that have been inactivated by methionine oxidation. MSRB family specifically reduces the MetSO R-enantiomer. In Arabidopsis thaliana (Mouse-ear cress), this protein is Peptide methionine sulfoxide reductase B6 (MSRB6).